We begin with the raw amino-acid sequence, 483 residues long: MNIKTRFAPSPTGYLHIGNIRTALYAWLFARKQGGKFVLRIEDTNTVHLDNDEVIKNIISIMKWLRLDWDEGPYFQTKRLNRYNSIIYDMLQNNIAYRCFCSEERLSLLRLNQMKSGEKPKYDGRCRTICMFKNNAMLNTNRIIDSDKGSYVVRFCNPDVGKVSFYDQVRGMITFDNCELDDIIIQRSNGVPTYNFCVVVDDMDMNITHVVRGEEHINNTPRQINILKALRAEIPQYIHVPMILDQNRKKLSKRHGKSGIMQYRNDGFLPEAILNCLVRLGWSYGNQEIFSMDQMKKYFDFSEIHKSASVFDINKLMWFNHYYINHLPVNHIIKYLSEYIQIQNISDIDSVKLIDLVNLFSKRSHTLKEMIFNYRYLCKDFNIFEKKIAKKYLIPTMINPLKFFRKKLNNISNWTIKTVQTTIKETVHELNMNMNMVGMALRVALIGSDKSPSMSIVVYIIGKCQVLDRIDRAIDYINSLSHD.

A 'HIGH' region motif is present at residues 9-19 (PSPTGYLHIGN). Residues 250-254 (KLSKR) carry the 'KMSKS' region motif. ATP is bound at residue K253.

Belongs to the class-I aminoacyl-tRNA synthetase family. Glutamate--tRNA ligase type 1 subfamily. As to quaternary structure, monomer.

It is found in the cytoplasm. The enzyme catalyses tRNA(Glu) + L-glutamate + ATP = L-glutamyl-tRNA(Glu) + AMP + diphosphate. In terms of biological role, catalyzes the attachment of glutamate to tRNA(Glu) in a two-step reaction: glutamate is first activated by ATP to form Glu-AMP and then transferred to the acceptor end of tRNA(Glu). This chain is Glutamate--tRNA ligase, found in Blochmanniella floridana.